Here is a 584-residue protein sequence, read N- to C-terminus: Beta-(1--&gt;2)glucan export ATP-binding/permease protein NdvA (584 aa).

The ABC transmembrane type-1 domain maps to 21–301 (VSLVVAANII…MRQFSTQIFE (281 aa)). Transmembrane regions (helical) follow at residues 29–49 (IILA…IDAI), 57–77 (DILF…VLVA), 136–156 (THLA…SMDV), 158–178 (LTLV…MVMD), 248–268 (IAST…VQSG), and 272–292 (VGDV…LDQM). The region spanning 335–569 (VEFRHVSFDF…GGRFAALLHT (235 aa)) is the ABC transporter domain. 368–375 (GPTGAGKT) contributes to the ATP binding site.

This sequence belongs to the ABC transporter superfamily. Beta-(1--&gt;2)glucan exporter (TC 3.A.1.108.1) family. Homodimer.

The protein resides in the cell inner membrane. It carries out the reaction [(1-&gt;2)-beta-D-glucosyl](n)(in) + ATP + H2O = [(1-&gt;2)-beta-D-glucosyl](n)(out) + ADP + phosphate + H(+). In terms of biological role, involved in beta-(1--&gt;2)glucan export. Transmembrane domains (TMD) form a pore in the inner membrane and the ATP-binding domain (NBD) is responsible for energy generation. The protein is Beta-(1--&gt;2)glucan export ATP-binding/permease protein NdvA of Agrobacterium vitis (Rhizobium vitis).